Here is a 620-residue protein sequence, read N- to C-terminus: Glutathione-regulated potassium-efflux system protein KefC (620 aa).

Transmembrane regions (helical) follow at residues 4–24, 26–46, 54–74, 90–110, 114–134, 149–169, 178–198, 218–238, 270–290, 294–314, 327–347, and 359–379; these read HTLI…PIAV, LGLG…PWGL, SILH…GLEL, GALQ…LLGL, VAEL…MQAM, FAVL…IPLL, MGAF…VVLL, VFSA…EEVG, GLLL…GTLI, LRIV…LWLI, WFAV…GAAQ, and SLTL…VILN. An RCK N-terminal domain is found at 399–518; it reads QPRVIIAGFG…AGVEKPERET (120 aa). Positions 597 to 620 are disordered; sequence GWQGTEEGKHTGNMADEPETKPSS.

Belongs to the monovalent cation:proton antiporter 2 (CPA2) transporter (TC 2.A.37) family. KefC subfamily. In terms of assembly, homodimer. Interacts with the regulatory subunit KefF.

It localises to the cell inner membrane. Functionally, pore-forming subunit of a potassium efflux system that confers protection against electrophiles. Catalyzes K(+)/H(+) antiport. This is Glutathione-regulated potassium-efflux system protein KefC from Escherichia coli O17:K52:H18 (strain UMN026 / ExPEC).